The following is a 459-amino-acid chain: Ribulose bisphosphate carboxylase (459 aa).

Asn-111 is a substrate binding site. Lys-166 (proton acceptor) is an active-site residue. Lys-168 contacts substrate. Positions 191, 193, and 194 each coordinate Mg(2+). An N6-carboxylysine modification is found at Lys-191. The active-site Proton acceptor is the His-287. Positions 288, 321, and 368 each coordinate substrate.

This sequence belongs to the RuBisCO large chain family. Type II subfamily. Homodimer. Requires Mg(2+) as cofactor.

It carries out the reaction 2 (2R)-3-phosphoglycerate + 2 H(+) = D-ribulose 1,5-bisphosphate + CO2 + H2O. The enzyme catalyses D-ribulose 1,5-bisphosphate + O2 = 2-phosphoglycolate + (2R)-3-phosphoglycerate + 2 H(+). Functionally, ruBisCO catalyzes two reactions: the carboxylation of D-ribulose 1,5-bisphosphate, the primary event in carbon dioxide fixation, as well as the oxidative fragmentation of the pentose substrate. Both reactions occur simultaneously and in competition at the same active site. This Dechloromonas aromatica (strain RCB) protein is Ribulose bisphosphate carboxylase.